The primary structure comprises 307 residues: ADP,ATP carrier protein 3 (307 aa).

Solcar repeat units follow at residues 10-103 (TNFA…IKLM), 114-206 (KWFA…LKPL), and 214-300 (GSFL…LQMI). 5 helical membrane passes run 12 to 39 (FAIN…VKIL), 80 to 104 (TANV…KLMF), 112 to 132 (YGKW…LSLL), 182 to 203 (FMPS…FDSL), and 217 to 237 (LASF…SYPL). Residues Arg-85 and Lys-97 each contribute to the ADP site. An ADP-binding site is contributed by Arg-241. Residues 241–246 (RRRMMM) are important for transport activity. The Nucleotide carrier signature motif motif lies at 241–246 (RRRMMM). Residues 277 to 297 (CGANILRSVAGAGVISMYDQL) form a helical membrane-spanning segment.

The protein belongs to the mitochondrial carrier (TC 2.A.29) family. As to quaternary structure, monomer.

It is found in the mitochondrion inner membrane. The catalysed reaction is ADP(in) + ATP(out) = ADP(out) + ATP(in). With respect to regulation, the matrix-open state (m-state) is inhibited by the membrane-permeable bongkrekic acid (BKA). The cytoplasmic-open state (c-state) is inhibited by the membrane-impermeable toxic inhibitor carboxyatractyloside (CATR). ADP:ATP antiporter that mediates import of ADP into the mitochondrial matrix for ATP synthesis, and export of ATP out to fuel the cell. Cycles between the cytoplasmic-open state (c-state) and the matrix-open state (m-state): operates by the alternating access mechanism with a single substrate-binding site intermittently exposed to either the cytosolic (c-state) or matrix (m-state) side of the inner mitochondrial membrane. In Saccharomyces cerevisiae (strain ATCC 204508 / S288c) (Baker's yeast), this protein is ADP,ATP carrier protein 3 (AAC3).